A 397-amino-acid polypeptide reads, in one-letter code: Protein EMSY-LIKE 3 (397 aa).

The segment at 1 to 40 is disordered; sequence MDYRPSDSSGTDDDLPPSHQGRYQRNARPTGNGRPSVLNS. Residues 50–137 form the ENT domain; that stretch reads METQIHLIEQ…PQLVHDAPSP (88 aa). The stretch at 81–107 forms a coiled coil; the sequence is ESLITELRKELRVSDEEHRELLSRVNA. 2 disordered regions span residues 122–221 and 284–330; these read SLQS…SYDP and DPGI…TQNG. The span at 164–174 shows a compositional bias: polar residues; sequence LHPSMQPSSSA. Residues 175–182 carry the Nuclear localization signal motif; sequence LRRGGPPP. Positions 363-389 form a coiled coil; that stretch reads AEVEKAKRVLRDHELALMDAIAKLEEI. A Phosphoserine modification is found at serine 390.

It localises to the nucleus. Probably involved in the regulation of chromatin states. Contributes to basal immunity. The protein is Protein EMSY-LIKE 3 of Arabidopsis thaliana (Mouse-ear cress).